Consider the following 329-residue polypeptide: CDP-6-deoxy-L-threo-D-glycero-4-hexulose-3-dehydrase reductase (329 aa).

The 2Fe-2S ferredoxin-type domain occupies 2-93; the sequence is SLNVKLHPSG…ELDVNYYPEL (92 aa). [2Fe-2S] cluster-binding residues include cysteine 37, cysteine 42, cysteine 45, and cysteine 75. In terms of domain architecture, FAD-binding FR-type spans 98–197; the sequence is KKTYPCKLDS…EGPQGTFFVR (100 aa).

Monomer.

Its pathway is nucleotide-sugar biosynthesis; CDP-ascarylose biosynthesis. It functions in the pathway bacterial outer membrane biogenesis; lipopolysaccharide biosynthesis. In terms of biological role, participates in the conversion of CDP-6-deoxy-D-glycero-L-threo-4-hexulose to 3,6-dideoxy-D-glycero-D-glycero-4-hexulose together with CDP-6-deoxy-D-glycero-L-threo-4-hexulose-3-dehydrase (E1) in two consecutive steps. The detailed mechanism of E3 is not yet resolved. This is CDP-6-deoxy-L-threo-D-glycero-4-hexulose-3-dehydrase reductase (ascD) from Yersinia pestis.